Reading from the N-terminus, the 85-residue chain is Beta-mammal/insect toxin Lqhb1 (85 aa).

An N-terminal signal peptide occupies residues 1-19 (MKIIIFLIVSSLMLIGVKT). Residues 20–82 (DNGYLLNKAT…LWAYATNKCN (63 aa)) form the LCN-type CS-alpha/beta domain. 4 disulfides stabilise this stretch: Cys-31/Cys-81, Cys-35/Cys-56, Cys-42/Cys-63, and Cys-46/Cys-65.

It belongs to the long (4 C-C) scorpion toxin superfamily. Sodium channel inhibitor family. As to expression, expressed by the venom gland.

The protein localises to the secreted. Beta toxins bind voltage-independently at site-4 of sodium channels (Nav) and shift the voltage of activation toward more negative potentials thereby affecting sodium channel activation and promoting spontaneous and repetitive firing. Competes, with apparent high affinity, with anti-insect and anti-mammalian beta-toxins for binding to cockroach and rat brain synaptosomes, respectively. Also competes with an anti-mammalian alpha-toxin on binding to rat brain sodium channels. Has a weak effect on cardiac sodium channels and a marked effect on rat brain and skeletal muscle sodium channels. This chain is Beta-mammal/insect toxin Lqhb1, found in Leiurus hebraeus (Hebrew deathstalker scorpion).